Here is an 88-residue protein sequence, read N- to C-terminus: MLPRSCKDFYETLRTAVLCGQACAKDMGAIVFHGLWQGLAVLIAQPPPPTHRRLESRPTASVAVHDRQLVHMLANMVLAAETRGNHVY.

Positions 1–24 (MLPRSCKDFYETLRTAVLCGQACA) are cleaved as a signal peptide.

To Rhizobium NGR234A y4oL.

This is an uncharacterized protein from Sinorhizobium fredii (strain NBRC 101917 / NGR234).